An 880-amino-acid chain; its full sequence is Leucine--tRNA ligase (880 aa).

Positions 46 to 56 match the 'HIGH' region motif; the sequence is PYPSGALHMGH. The short motif at 638-642 is the 'KMSKS' region element; sequence KMSKS. Lys-641 serves as a coordination point for ATP.

Belongs to the class-I aminoacyl-tRNA synthetase family.

The protein resides in the cytoplasm. The catalysed reaction is tRNA(Leu) + L-leucine + ATP = L-leucyl-tRNA(Leu) + AMP + diphosphate. The polypeptide is Leucine--tRNA ligase (Xanthomonas oryzae pv. oryzae (strain KACC10331 / KXO85)).